Reading from the N-terminus, the 383-residue chain is Ribosomal RNA large subunit methyltransferase G (383 aa).

It belongs to the methyltransferase superfamily. RlmG family.

The protein localises to the cytoplasm. The catalysed reaction is guanosine(1835) in 23S rRNA + S-adenosyl-L-methionine = N(2)-methylguanosine(1835) in 23S rRNA + S-adenosyl-L-homocysteine + H(+). Specifically methylates the guanine in position 1835 (m2G1835) of 23S rRNA. The polypeptide is Ribosomal RNA large subunit methyltransferase G (Shewanella denitrificans (strain OS217 / ATCC BAA-1090 / DSM 15013)).